Consider the following 458-residue polypeptide: MSCICLKNEKLNVINQVKRFIKKYCKSTQPLLLALSGGADSLSLFYCLLACRLEGILSFHVAHVDHGWREESAKEATILKNLAEQHQVPYHQLKIDLSQLAGNLEDACRKQRQKFFKEICLQNNLQAVCLGHQENDQVETVLKRILEGSHWSHFDGLKERMWHDQVQFLRPLLGIQKDEILAFLKGNQLKAFEDGTNCDERFMRARMRRTIIPDLNRSFGKKIDNSLVYIASEMSELKNFFLGRVSPLLGQIVKGPFGVYLNLANHPSIDLVEIKYLLRLISEQELFFLSRQILQRASEAIEKLEPQLSFEMGTKKIVIDRGHFFILSKKTACKNPNLQISGSSLQYYGKWMIKTNESFYHQNLQASTWLDGWRGYLKTYLPLDKYVLGQASKHAKLLRHHSTINKWWSSHHVPPFLRSFFPVIWQHNEIAHEFLTGLERQNLQEGEKCLQIELSYLT.

36 to 41 (SGGADS) serves as a coordination point for ATP.

Belongs to the tRNA(Ile)-lysidine synthase family.

It localises to the cytoplasm. It catalyses the reaction cytidine(34) in tRNA(Ile2) + L-lysine + ATP = lysidine(34) in tRNA(Ile2) + AMP + diphosphate + H(+). Ligates lysine onto the cytidine present at position 34 of the AUA codon-specific tRNA(Ile) that contains the anticodon CAU, in an ATP-dependent manner. Cytidine is converted to lysidine, thus changing the amino acid specificity of the tRNA from methionine to isoleucine. This Protochlamydia amoebophila (strain UWE25) protein is tRNA(Ile)-lysidine synthase.